A 100-amino-acid chain; its full sequence is Small ribosomal subunit protein uS14c (100 aa).

This sequence belongs to the universal ribosomal protein uS14 family. In terms of assembly, part of the 30S ribosomal subunit.

It localises to the plastid. The protein resides in the chloroplast. Its function is as follows. Binds 16S rRNA, required for the assembly of 30S particles. The sequence is that of Small ribosomal subunit protein uS14c from Lactuca sativa (Garden lettuce).